The following is an 868-amino-acid chain: Rifampicin phosphotransferase (868 aa).

The segment at 1–313 (MSSFVLDFQE…IYIVQSRPIT (313 aa)) is ATP-binding. Positions 22, 116, 131, 135, 182, 296, 308, and 310 each coordinate ATP. The tract at residues 326 to 756 (NHVYISVGHQ…TSDGEIITGK (431 aa)) is rifampicin-binding. The segment at 769–867 (GLPVSSGVVE…VHGTEGYIEV (99 aa)) is swivel phosphohistidine. The Tele-phosphohistidine intermediate role is filled by H827.

It belongs to the rifampicin phosphotransferase family.

The enzyme catalyses rifampicin + ATP + H2O = 21-phosphorifampicin + AMP + phosphate + 2 H(+). In terms of biological role, catalyzes the phosphorylation of rifampicin, also known as rifampin (RIF), leading to its inactivation. Confers high level resistance to a variety of clinically used rifamycin antibiotics. Does not show phosphoenolpyruvate (PEP) synthase activity. This Bacillus cereus (strain ATCC 14579 / DSM 31 / CCUG 7414 / JCM 2152 / NBRC 15305 / NCIMB 9373 / NCTC 2599 / NRRL B-3711) protein is Rifampicin phosphotransferase.